Consider the following 759-residue polypeptide: MRYNQYSYTKASEEVMLDELARLGFTIQTTNSPKENLHHFLQKILFRYQDVNYVLSSWVADQKTDLLTFFQSDKQLTEEVFYTVALQVLGFAPFVDFDDVTAFCKEIHFPITYGNILENLYQLLNTRTKLGNTLIDQLVSEGFIPESNDYHFFNGKSLATFSSHEAIREVVYVESRVDTDGDGKPDLVKVSIIRPSYEGQVPAVMTASPYHQGTNDKASDKALHNMNVDLSCKNPRTITVQESSIQTIEPQGQASLVEKAEEKLGHIGSYTLNDYLLPRGFANLYVSGVGTKDSEGMMTSGDYQQIEAYKNVIDWLNGRCRAFTDHTRQREIKATWSNGKVATTGISYLGTMSNGLATTGVDGLEVIIAEAGISSWYNYYRENGLVTSPGGYPGEDFESLTELTYSRNLLAGEYLRHNQAYQAYLDQQRKDLERETGDYNQFWHDRNYLIHADKVKAEVVFTHGSQDWNVKPLHVYNMFHALPAHIKKHLFFHNGAHVYINNWQSIDFRESMNALLSKKLLGHSSDFDLPPVIWQDNSQAQNWMSLDDFGNQEDYSHFHLGKGSQEIRNRYSDEDYNRFAKSYQVFKNELFEGKTQQITLDWTLEQDLFINGPAKLKLRLKSSTNKGLISAQLLDYGPAKRLTPIPSLLEPRVMDNGRYYMLDNLMELPFADTPHRVITKGFLNLQNRTDLLTVEEVVPNQWMELSFELQPTIYKLKKGDQLRLVLYTTDFEHTVRDKTDYHLSVDMEHSSLSLPHKKS.

Active-site charge relay system residues include Ser347, Asp467, and His497.

This sequence belongs to the peptidase S15 family. In terms of assembly, homodimer.

Its subcellular location is the secreted. The enzyme catalyses Hydrolyzes Xaa-Pro-|- bonds to release unblocked, N-terminal dipeptides from substrates including Ala-Pro-|-p-nitroanilide and (sequentially) Tyr-Pro-|-Phe-Pro-|-Gly-Pro-|-Ile.. Its function is as follows. Removes N-terminal dipeptides sequentially from polypeptides having unsubstituted N-termini provided that the penultimate residue is proline. The protein is Xaa-Pro dipeptidyl-peptidase (pepX) of Streptococcus gordonii.